A 126-amino-acid chain; its full sequence is Small ribosomal subunit protein eS8 (126 aa).

Positions 1 to 10 (MAIWQGSSLR) are enriched in polar residues. A disordered region spans residues 1 to 35 (MAIWQGSSLRKPSGARSRRNKNKRNAEFGRNPAET).

This sequence belongs to the eukaryotic ribosomal protein eS8 family. Part of the 30S ribosomal subunit.

In Methanosphaera stadtmanae (strain ATCC 43021 / DSM 3091 / JCM 11832 / MCB-3), this protein is Small ribosomal subunit protein eS8.